Here is a 1850-residue protein sequence, read N- to C-terminus: Serine/threonine-protein kinase WNK (1850 aa).

Disordered regions lie at residues 1–108, 221–253, and 272–309; these read MPDS…NALE, QHSI…NNDK, and MVND…EKAA. Composition is skewed to low complexity over residues 16–26 and 234–251; these read SSVSSTTASTT and PPNT…AANN. The segment covering 284-309 has biased composition (basic and acidic residues); that stretch reads DMDKMVSEEERARKEQEKREEEEKAA. The Protein kinase domain occupies 334–596; the sequence is LKFDEELGRG…VKQLLVDDFF (263 aa). ATP contacts are provided by residues Ser-344, 416 to 419, and Lys-466; that span reads TELM. Asp-483 (proton acceptor) is an active-site residue. Residues 693–749 are a coiled coil; that stretch reads DHRLLEIKRAKEEEERIREEAEIKEELRLRAEAKEKEKERLEKERLEKKAAAAAAAN. Residues 727–742 show a composition bias toward basic and acidic residues; it reads EKEKERLEKERLEKKA. Disordered regions lie at residues 727–790, 890–943, 1040–1130, 1188–1249, 1588–1636, 1721–1740, and 1769–1850; these read EKEK…AQQP, TPAS…KRKS, EPPT…AAKP, SPVS…TPAI, GTHI…PSHS, ASLS…DNEG, and IIPS…IENV. Residues 751–760 are compositionally biased toward pro residues; sequence NPTPIPPTPA. Polar residues predominate over residues 776–790; it reads STQTSAEIQQSAQQP. The span at 890-934 shows a compositional bias: low complexity; that stretch reads TPASIASPSPAPSATDVASTTAPVTPAPTPTTTTDGGAAAASTTT. Basic and acidic residues predominate over residues 1062–1071; sequence PKIEIEKTPP. Residues 1077-1101 show a composition bias toward polar residues; it reads QEPNNVQVTNVRKVSQESNAESVQS. A compositionally biased stretch (low complexity) spans 1188 to 1207; sequence SPVSHSLSSNSSPSATTHSN. Positions 1208-1217 are enriched in polar residues; it reads MSSIQSTTSV. Low complexity predominate over residues 1771-1805; sequence PSSRQSVRSATSSSPSTPPSSSSAPPKSLSSPTKS. Residues 1806–1820 show a composition bias toward polar residues; that stretch reads YVSHCSLSIGYGSTA. Positions 1821–1832 are enriched in low complexity; sequence SSEQQQREPSPS.

The protein belongs to the protein kinase superfamily. Ser/Thr protein kinase family. WNK subfamily. Interacts with gck-3 (via C-terminus). The cofactor is Mg(2+). In terms of tissue distribution, expressed in pharynx, nervous system, hypodermis, spermatheca, excretory cell and canal and body wall muscles.

Its subcellular location is the cytoplasm. It carries out the reaction L-seryl-[protein] + ATP = O-phospho-L-seryl-[protein] + ADP + H(+). It catalyses the reaction L-threonyl-[protein] + ATP = O-phospho-L-threonyl-[protein] + ADP + H(+). With respect to regulation, activated in response to hyperosmotic stress: cell shrinkage promotes formation of a membraneless compartment that concentrates wnk-1 with its downstrem substrates. In terms of biological role, serine/threonine-protein kinase component of the WNK3-SPAK/OSR1 kinase cascade, which plays an important role in the regulation of electrolyte homeostasis and regulatory volume increase in response to hyperosmotic stress. Wnk-1 mediates regulatory volume increase in response to hyperosmotic stress by acting as a molecular crowding sensor, which senses cell shrinkage and mediates formation of a membraneless compartment by undergoing liquid-liquid phase separation. The membraneless compartment concentrates wnk-1 with its substrates. Phosphorylates gck-3. Plays a role in osmotic stress responses during which it increases gpdh-1 translation, likely by phosphorylating gck-3. Essential for larval development and the tubular formation of the excretory canals. The protein is Serine/threonine-protein kinase WNK of Caenorhabditis elegans.